The following is a 360-amino-acid chain: Chorismate synthase (360 aa).

Arginine 47 lines the NADP(+) pocket. FMN contacts are provided by residues 124–126 (RSS), 240–241 (NA), glycine 285, 300–304 (KPVAT), and arginine 326.

This sequence belongs to the chorismate synthase family. As to quaternary structure, homotetramer. The cofactor is FMNH2.

The enzyme catalyses 5-O-(1-carboxyvinyl)-3-phosphoshikimate = chorismate + phosphate. It functions in the pathway metabolic intermediate biosynthesis; chorismate biosynthesis; chorismate from D-erythrose 4-phosphate and phosphoenolpyruvate: step 7/7. Functionally, catalyzes the anti-1,4-elimination of the C-3 phosphate and the C-6 proR hydrogen from 5-enolpyruvylshikimate-3-phosphate (EPSP) to yield chorismate, which is the branch point compound that serves as the starting substrate for the three terminal pathways of aromatic amino acid biosynthesis. This reaction introduces a second double bond into the aromatic ring system. This chain is Chorismate synthase, found in Cytophaga hutchinsonii (strain ATCC 33406 / DSM 1761 / CIP 103989 / NBRC 15051 / NCIMB 9469 / D465).